Consider the following 90-residue polypeptide: MGAERVCTKAPEITQDEAEIYSLTNMEGNIGIKGCEFKSWLFKFYQARSQVLLCGEVKNPYLLTSNKTTVKEQNACLTHPDRSAMAGLLL.

This is an uncharacterized protein from Homo sapiens (Human).